The following is a 257-amino-acid chain: Imidazole glycerol phosphate synthase subunit HisF (257 aa).

Catalysis depends on residues Asp12 and Asp131.

Belongs to the HisA/HisF family. Heterodimer of HisH and HisF.

It is found in the cytoplasm. It catalyses the reaction 5-[(5-phospho-1-deoxy-D-ribulos-1-ylimino)methylamino]-1-(5-phospho-beta-D-ribosyl)imidazole-4-carboxamide + L-glutamine = D-erythro-1-(imidazol-4-yl)glycerol 3-phosphate + 5-amino-1-(5-phospho-beta-D-ribosyl)imidazole-4-carboxamide + L-glutamate + H(+). It functions in the pathway amino-acid biosynthesis; L-histidine biosynthesis; L-histidine from 5-phospho-alpha-D-ribose 1-diphosphate: step 5/9. Its function is as follows. IGPS catalyzes the conversion of PRFAR and glutamine to IGP, AICAR and glutamate. The HisF subunit catalyzes the cyclization activity that produces IGP and AICAR from PRFAR using the ammonia provided by the HisH subunit. This Paraburkholderia phytofirmans (strain DSM 17436 / LMG 22146 / PsJN) (Burkholderia phytofirmans) protein is Imidazole glycerol phosphate synthase subunit HisF.